The primary structure comprises 193 residues: Cell wall galactomannoprotein (193 aa).

Positions 1-17 (MFFRILALLPLVFLVTA) are cleaved as a signal peptide. Asparagine 38 and asparagine 173 each carry an N-linked (GlcNAc...) asparagine glycan.

The protein belongs to the cell wall mannoprotein 1 family. Post-translationally, galactomannoprotein, glycosylated.

The protein localises to the secreted. It localises to the cell wall. Constitutive protein of the cell wall. The chain is Cell wall galactomannoprotein from Armillaria ostoyae (Armillaria root rot fungus).